The following is a 507-amino-acid chain: ATP synthase subunit alpha (507 aa).

169–176 (GDRQTGKT) is a binding site for ATP.

This sequence belongs to the ATPase alpha/beta chains family. As to quaternary structure, F-type ATPases have 2 components, CF(1) - the catalytic core - and CF(0) - the membrane proton channel. CF(1) has five subunits: alpha(3), beta(3), gamma(1), delta(1), epsilon(1). CF(0) has three main subunits: a(1), b(2) and c(9-12). The alpha and beta chains form an alternating ring which encloses part of the gamma chain. CF(1) is attached to CF(0) by a central stalk formed by the gamma and epsilon chains, while a peripheral stalk is formed by the delta and b chains. In this bacterium the a and b subunits are transcribed but do not seem to be translated, thus the ATP synthase consists of the alpha, beta, gamma, delta, epsilon and c subunits.

The protein resides in the cell membrane. The catalysed reaction is ATP + H2O + 4 H(+)(in) = ADP + phosphate + 5 H(+)(out). Functionally, produces ATP from ADP in the presence of a proton gradient across the membrane. The alpha chain is a regulatory subunit. The polypeptide is ATP synthase subunit alpha (Moorella thermoacetica (strain ATCC 39073 / JCM 9320)).